Reading from the N-terminus, the 241-residue chain is GPI-anchored hemophore RBT5 (241 aa).

The signal sequence occupies residues 1–20 (MLALSLLSIVSIASAAGVTA). A CFEM domain is found at 26 to 137 (NPYTIFPSVA…DALAKAADAA (112 aa)). Disulfide bonds link Cys54/Cys94, Cys58/Cys89, Cys68/Cys75, and Cys77/Cys110. Residue Asp72 coordinates heme. 2 stretches are compositionally biased toward low complexity: residues 140–154 (TTAE…AAET) and 163–182 (KETT…PAET). The segment at 140–210 (TTAESTTAES…SVAQSSSSAA (71 aa)) is disordered. Basic and acidic residues predominate over residues 183–199 (SKAEETSKAAETTKAEE). The segment covering 200–210 (SSVAQSSSSAA) has biased composition (low complexity). Asn221 is lipidated: GPI-anchor amidated asparagine. Residues 222–241 (AGNMPAVAIGGVIAAVAALF) constitute a propeptide, removed in mature form.

Belongs to the RBT5 family. Interacts with PGA7. The GPI-anchor is attached to the protein in the endoplasmic reticulum and serves to target the protein to the cell surface. There, the glucosamine-inositol phospholipid moiety is cleaved off and the GPI-modified mannoprotein is covalently attached via its lipidless GPI glycan remnant to the 1,6-beta-glucan of the outer cell wall layer. In terms of processing, mannosylated.

It is found in the secreted. The protein localises to the cell wall. The protein resides in the cell membrane. Its function is as follows. GPI-linked hyphal surface heme-binding protein involved in heme-iron utilization. Heme transfer occurs between PGA7, RBT5 and CSA2 supporting a model in which the 3 CFEM proteins cooperate in a heme-acquisition system and form a cross-cell wall heme-transfer cascade. The ability to acquire iron from host tissues is a major virulence factor of pathogenic microorganisms. Required for biofilm formation. This chain is GPI-anchored hemophore RBT5, found in Candida albicans (strain SC5314 / ATCC MYA-2876) (Yeast).